A 197-amino-acid chain; its full sequence is RNA-binding protein with multiple splicing (197 aa).

Met-1 bears the N-acetylmethionine mark. Phosphothreonine is present on Thr-12. The region spanning Arg-24 to Ala-101 is the RRM domain. Positions Phe-98 to Met-105 are interaction with RNA. Position 113 is a phosphothreonine (Thr-113).

In terms of assembly, homodimer; each protein chain binds one RNA molecule via the external surface of the homodimer. Interacts with RNA binding proteins MBNL1, RBFOX2, RBM4 and RBM14; the interaction allows cooperative assembly of stable cell-specific alternative splicing regulatory complexes. Also interacts with RBM47, MATR3 and ESRP2. Interacts with SMAD2, SMAD3 and SMAD4; the interactions are direct. In terms of tissue distribution, mRNA expressed in developing heart, with significantly higher expression in the atria relative to the ventricles.

The protein localises to the nucleus. Its subcellular location is the cytoplasm. It is found in the stress granule. The protein resides in the P-body. In terms of biological role, RNA binding protein that mediates the regulation of pre-mRNA alternative splicing (AS). Acts either as activator (FLNB, HSPG2, LIPA1, MYOCD, PTPRF and PPFIBP1) or repressor (TPM1, ACTN1, ITGA7, PIEZO1, LSM14B, MBNL1 and MBML2) of splicing events on specific pre-mRNA targets. Together with RNA binding proteins RBFOX2 and MBNL1/2, activates a splicing program associated with differentiated contractile vascular smooth muscle cells (SMC) by regulating AS of numerous pre-mRNA involved in actin cytoskeleton and focal adhesion machineries, suggesting a role in promoting a cell differentiated state. Binds to introns, exons and 3'-UTR associated with tandem CAC trinucleotide motifs separated by a variable spacer region, at a minimum as a dimer. The minimal length of RNA required for RBPMS-binding tandem CAC motifs is 15 nt, with spacing ranging from 1 to 9 nt. Can also bind to CA dinucleotide repeats. Mediates repression of TPM1 exon 3 by binding to CAC tandem repeats in the flanking intronic regions, followed by higher-order oligomerization and heterotypic interactions with other splicing regulators including MBNL1 and RBFOX2, which prevents assembly of ATP-dependent splicing complexes. In Mus musculus (Mouse), this protein is RNA-binding protein with multiple splicing.